The sequence spans 398 residues: Exodeoxyribonuclease 7 large subunit (398 aa).

This sequence belongs to the XseA family. Heterooligomer composed of large and small subunits.

The protein resides in the cytoplasm. The catalysed reaction is Exonucleolytic cleavage in either 5'- to 3'- or 3'- to 5'-direction to yield nucleoside 5'-phosphates.. Its function is as follows. Bidirectionally degrades single-stranded DNA into large acid-insoluble oligonucleotides, which are then degraded further into small acid-soluble oligonucleotides. The chain is Exodeoxyribonuclease 7 large subunit from Chlorobaculum tepidum (strain ATCC 49652 / DSM 12025 / NBRC 103806 / TLS) (Chlorobium tepidum).